We begin with the raw amino-acid sequence, 373 residues long: Peptide chain release factor subunit 1 (373 aa).

Belongs to the eukaryotic release factor 1 family. In terms of assembly, heterodimer of two subunits, one of which binds GTP.

It is found in the cytoplasm. In terms of biological role, directs the termination of nascent peptide synthesis (translation) in response to the termination codons UAA, UAG and UGA. This Aeropyrum pernix (strain ATCC 700893 / DSM 11879 / JCM 9820 / NBRC 100138 / K1) protein is Peptide chain release factor subunit 1 (prf1).